A 321-amino-acid polypeptide reads, in one-letter code: Lipoyl synthase (321 aa).

Positions 1-21 are disordered; the sequence is MRHRWEDRPVAPPPDGRPTEY. The [4Fe-4S] cluster site is built by Cys-63, Cys-68, Cys-74, Cys-89, Cys-93, Cys-96, and Ser-302. Positions 75-291 constitute a Radical SAM core domain; that stretch reads WNNRTATFMI…KKLGLEMGFS (217 aa). The tract at residues 301-321 is disordered; sequence SSYHAHEQTEDARRGALGARG. A compositionally biased stretch (basic and acidic residues) spans 304 to 314; that stretch reads HAHEQTEDARR.

The protein belongs to the radical SAM superfamily. Lipoyl synthase family. [4Fe-4S] cluster is required as a cofactor.

The protein localises to the cytoplasm. It carries out the reaction [[Fe-S] cluster scaffold protein carrying a second [4Fe-4S](2+) cluster] + N(6)-octanoyl-L-lysyl-[protein] + 2 oxidized [2Fe-2S]-[ferredoxin] + 2 S-adenosyl-L-methionine + 4 H(+) = [[Fe-S] cluster scaffold protein] + N(6)-[(R)-dihydrolipoyl]-L-lysyl-[protein] + 4 Fe(3+) + 2 hydrogen sulfide + 2 5'-deoxyadenosine + 2 L-methionine + 2 reduced [2Fe-2S]-[ferredoxin]. Its pathway is protein modification; protein lipoylation via endogenous pathway; protein N(6)-(lipoyl)lysine from octanoyl-[acyl-carrier-protein]: step 2/2. Its function is as follows. Catalyzes the radical-mediated insertion of two sulfur atoms into the C-6 and C-8 positions of the octanoyl moiety bound to the lipoyl domains of lipoate-dependent enzymes, thereby converting the octanoylated domains into lipoylated derivatives. The sequence is that of Lipoyl synthase from Rubrobacter xylanophilus (strain DSM 9941 / JCM 11954 / NBRC 16129 / PRD-1).